Here is a 168-residue protein sequence, read N- to C-terminus: MKNKKAIFPGTFDPLTNGHINLIERSIKVFDKVIIIVANNFKKNQLFNLKERMHHIKKATKNYKNIKVIGINDLTTNFARKNNIKILIRGIRNIFDFENEFIMEKTNKYLYPEMESIFMISDINWSYMSSSMIKEIIFYGGNLDYFLPECVIKDIKKKIKRKIVRNLN.

Threonine 11 lines the substrate pocket. ATP-binding positions include 11 to 12 and histidine 19; that span reads TF. The substrate site is built by lysine 43, threonine 75, and arginine 89. Residues 90-92, glutamate 100, and 125-131 contribute to the ATP site; these read GIR and WSYMSSS.

Belongs to the bacterial CoaD family. Homohexamer. It depends on Mg(2+) as a cofactor.

The protein resides in the cytoplasm. It carries out the reaction (R)-4'-phosphopantetheine + ATP + H(+) = 3'-dephospho-CoA + diphosphate. The protein operates within cofactor biosynthesis; coenzyme A biosynthesis; CoA from (R)-pantothenate: step 4/5. Reversibly transfers an adenylyl group from ATP to 4'-phosphopantetheine, yielding dephospho-CoA (dPCoA) and pyrophosphate. The sequence is that of Phosphopantetheine adenylyltransferase from Wigglesworthia glossinidia brevipalpis.